The following is a 161-amino-acid chain: Nucleotide-binding protein Lferr_1091 (161 aa).

It belongs to the YajQ family.

In terms of biological role, nucleotide-binding protein. This chain is Nucleotide-binding protein Lferr_1091, found in Acidithiobacillus ferrooxidans (strain ATCC 53993 / BNL-5-31) (Leptospirillum ferrooxidans (ATCC 53993)).